Consider the following 768-residue polypeptide: ATP-dependent zinc metalloprotease FtsH (768 aa).

At 1–33 (MADRDKNDIRKRLEELRKDNNRRNNRQDNGNRS) the chain is on the cytoplasmic side. Residues 34-54 (PFSGFLFFIFVILLFTFTLLF) traverse the membrane as a helical segment. Residues 55–139 (HRDIQTYFQE…KLNSLQPSGG (85 aa)) lie on the Periplasmic side of the membrane. Residues 140–160 (GFFLLLLGQFLPMIIMIGLMV) traverse the membrane as a helical segment. At 161 to 768 (YLAKKMVGGS…SNFKLPSFME (608 aa)) the chain is on the cytoplasmic side. Residue 238 to 245 (GRPGTGKT) coordinates ATP. His461 provides a ligand contact to Zn(2+). The active site involves Glu462. Zn(2+) is bound by residues His465 and Asp536. The segment at 647 to 768 (EESIQKGSEG…SNFKLPSFME (122 aa)) is disordered. Basic and acidic residues predominate over residues 669–698 (QENKTVEAEVHDSNLKSDTEKLAEAVREIT). The segment covering 715 to 731 (KDSDDNEKNDDDNENSD) has biased composition (acidic residues).

The protein in the central section; belongs to the AAA ATPase family. This sequence in the C-terminal section; belongs to the peptidase M41 family. In terms of assembly, homohexamer. Requires Zn(2+) as cofactor.

The protein resides in the cell inner membrane. Acts as a processive, ATP-dependent zinc metallopeptidase for both cytoplasmic and membrane proteins. Plays a role in the quality control of integral membrane proteins. In Leptotrichia buccalis (strain ATCC 14201 / DSM 1135 / JCM 12969 / NCTC 10249 / C-1013-b), this protein is ATP-dependent zinc metalloprotease FtsH.